Consider the following 266-residue polypeptide: Phosphatidylglycerol--prolipoprotein diacylglyceryl transferase (266 aa).

The next 7 membrane-spanning stretches (helical) occupy residues 10-30 (VALA…LIGI), 56-76 (LVFW…VLFY), 92-112 (WKGG…VWWF), 120-140 (FFQL…AGRI), 171-191 (PSQL…LWLF), 199-219 (ASVS…VEFV), and 233-253 (WLTM…ALMV). A 1,2-diacyl-sn-glycero-3-phospho-(1'-sn-glycerol) is bound at residue R139.

Belongs to the Lgt family.

The protein resides in the cell inner membrane. It catalyses the reaction L-cysteinyl-[prolipoprotein] + a 1,2-diacyl-sn-glycero-3-phospho-(1'-sn-glycerol) = an S-1,2-diacyl-sn-glyceryl-L-cysteinyl-[prolipoprotein] + sn-glycerol 1-phosphate + H(+). Its pathway is protein modification; lipoprotein biosynthesis (diacylglyceryl transfer). Its function is as follows. Catalyzes the transfer of the diacylglyceryl group from phosphatidylglycerol to the sulfhydryl group of the N-terminal cysteine of a prolipoprotein, the first step in the formation of mature lipoproteins. In Pseudomonas paraeruginosa (strain DSM 24068 / PA7) (Pseudomonas aeruginosa (strain PA7)), this protein is Phosphatidylglycerol--prolipoprotein diacylglyceryl transferase.